The primary structure comprises 432 residues: Nematocyst expressed protein 3-like (432 aa).

Residues 1 to 19 form the signal peptide; it reads MRVVYLVLVVAVIIAITEA. Disulfide bonds link C52-C91, C59-C84, C73-C88, C125-C140, C157-C176, and C166-C180. ShKT domains follow at residues 59-91, 107-143, and 149-183; these read CKAF…CKLC, VVRA…CMLC, and GPCD…CDVY. Positions 235 to 313 are enriched in low complexity; the sequence is GAQYPAATAA…PEAAPSEPEA (79 aa). The tract at residues 235-432 is disordered; that stretch reads GAQYPAATAA…KSKSGHKRHH (198 aa). The span at 314-330 shows a compositional bias: pro residues; the sequence is APAPAPEMAPAPAPEMA. The span at 331-408 shows a compositional bias: low complexity; sequence PAPEAASAPA…AAPSEQPMPG (78 aa). Residues 409–432 show a composition bias toward basic residues; that stretch reads KKSKSKPSKRKGVKKSKSGHKRHH.

This sequence belongs to the NEP3 family. Nematocytes. In late planulae, transcripts are found throughout the ectoderm in nematocytes, with high concentration of expressing cells in the oral pole. In primary polyps, is expressed in nematocytes in the body wall and physa ectoderm and in the upper and lower pharynx.

It is found in the nematocyst. Its subcellular location is the secreted. Its function is as follows. Probable toxin. This Nematostella vectensis (Starlet sea anemone) protein is Nematocyst expressed protein 3-like.